The chain runs to 406 residues: Bifunctional enzyme IspD/IspF (406 aa).

The interval Met-1–Val-246 is 2-C-methyl-D-erythritol 4-phosphate cytidylyltransferase. A 2-C-methyl-D-erythritol 2,4-cyclodiphosphate synthase region spans residues Arg-247–Pro-406. 2 residues coordinate a divalent metal cation: Asp-253 and His-255. Residues Asp-253–His-255 and His-279–Ser-280 contribute to the 4-CDP-2-C-methyl-D-erythritol 2-phosphate site. His-287 is an a divalent metal cation binding site. 4-CDP-2-C-methyl-D-erythritol 2-phosphate contacts are provided by residues Asp-301 to Gly-303, Thr-377 to Glu-380, Phe-384, and Arg-387.

In the N-terminal section; belongs to the IspD/TarI cytidylyltransferase family. IspD subfamily. This sequence in the C-terminal section; belongs to the IspF family. It depends on a divalent metal cation as a cofactor.

It catalyses the reaction 2-C-methyl-D-erythritol 4-phosphate + CTP + H(+) = 4-CDP-2-C-methyl-D-erythritol + diphosphate. It carries out the reaction 4-CDP-2-C-methyl-D-erythritol 2-phosphate = 2-C-methyl-D-erythritol 2,4-cyclic diphosphate + CMP. It participates in isoprenoid biosynthesis; isopentenyl diphosphate biosynthesis via DXP pathway; isopentenyl diphosphate from 1-deoxy-D-xylulose 5-phosphate: step 2/6. It functions in the pathway isoprenoid biosynthesis; isopentenyl diphosphate biosynthesis via DXP pathway; isopentenyl diphosphate from 1-deoxy-D-xylulose 5-phosphate: step 4/6. In terms of biological role, bifunctional enzyme that catalyzes the formation of 4-diphosphocytidyl-2-C-methyl-D-erythritol from CTP and 2-C-methyl-D-erythritol 4-phosphate (MEP) (IspD), and catalyzes the conversion of 4-diphosphocytidyl-2-C-methyl-D-erythritol 2-phosphate (CDP-ME2P) to 2-C-methyl-D-erythritol 2,4-cyclodiphosphate (ME-CPP) with a corresponding release of cytidine 5-monophosphate (CMP) (IspF). In Rhizobium rhizogenes (strain K84 / ATCC BAA-868) (Agrobacterium radiobacter), this protein is Bifunctional enzyme IspD/IspF.